Reading from the N-terminus, the 986-residue chain is Regulator of telomere elongation helicase 1 homolog (986 aa).

The 320-residue stretch at 7–326 (AGIPVHFPFE…KEMLLELEKA (320 aa)) folds into the Helicase ATP-binding domain. 42 to 49 (SPTGTGKT) contributes to the ATP binding site. [4Fe-4S] cluster-binding residues include cysteine 148, cysteine 166, cysteine 175, and cysteine 211. Residues 254–257 (DEGH) carry the DEAH box motif. At threonine 875 the chain carries Phosphothreonine.

The protein belongs to the helicase family. RAD3/XPD subfamily.

The protein localises to the nucleus. It carries out the reaction ATP + H2O = ADP + phosphate + H(+). In terms of biological role, a probable ATP-dependent DNA helicase implicated in DNA repair and the maintenance of genomic stability. Acts as an anti-recombinase to counteract toxic recombination and limit crossover during meiosis. Regulates meiotic recombination and crossover homeostasis by physically dissociating strand invasion events and thereby promotes noncrossover repair by meiotic synthesis dependent strand annealing (SDSA) as well as disassembly of D loop recombination intermediates. In Drosophila grimshawi (Hawaiian fruit fly), this protein is Regulator of telomere elongation helicase 1 homolog.